Here is an 875-residue protein sequence, read N- to C-terminus: DNA mismatch repair protein MutS (875 aa).

Position 625 to 632 (625 to 632 (GPNMGGKS)) interacts with ATP.

It belongs to the DNA mismatch repair MutS family.

This protein is involved in the repair of mismatches in DNA. It is possible that it carries out the mismatch recognition step. This protein has a weak ATPase activity. The sequence is that of DNA mismatch repair protein MutS from Symbiobacterium thermophilum (strain DSM 24528 / JCM 14929 / IAM 14863 / T).